The primary structure comprises 178 residues: Cytochrome b6-f complex iron-sulfur subunit (178 aa).

A helical transmembrane segment spans residues 20–42 (LLTFGTATGVALGALYPVANFFM). The Rieske domain maps to 71–161 (NHPAGDRSLV…IDIDDDNVLV (91 aa)). Residues Cys-107, His-109, Cys-125, and His-128 each coordinate [2Fe-2S] cluster. A disulfide bridge connects residues Cys-112 and Cys-127.

It belongs to the Rieske iron-sulfur protein family. As to quaternary structure, the 4 large subunits of the cytochrome b6-f complex are cytochrome b6, subunit IV (17 kDa polypeptide, PetD), cytochrome f and the Rieske protein, while the 4 small subunits are PetG, PetL, PetM and PetN. The complex functions as a dimer. Requires [2Fe-2S] cluster as cofactor.

Its subcellular location is the cellular thylakoid membrane. It carries out the reaction 2 oxidized [plastocyanin] + a plastoquinol + 2 H(+)(in) = 2 reduced [plastocyanin] + a plastoquinone + 4 H(+)(out). Its function is as follows. Component of the cytochrome b6-f complex, which mediates electron transfer between photosystem II (PSII) and photosystem I (PSI), cyclic electron flow around PSI, and state transitions. In Prochlorococcus marinus (strain SARG / CCMP1375 / SS120), this protein is Cytochrome b6-f complex iron-sulfur subunit.